The sequence spans 407 residues: MSTAPSQQHASAQVPDPRGRFGDFGGRFVPETLTRALDELSEEYEKAKRDPEFQRELDGLLKTFVGRPSPLYHAKRLSSAVGGAQIWLKREDLNHTGAHKINNTIGQALLTLRMGKTRVIAETGAGQHGVASATACAHFGLPCTVYMGAEDIRRQKPNVFSMKLLGANISAVESGSRTLRDAVNEAMRDWMSSVEDTHYIIGSVIGPHPFPMMVRDFQSVIGRETREQCRDTFGRLPDCVVACVGGGSNAAGMFYPFVEDEGVRMVGVEAGGRSATPGDHASPLSYGNPGVLHGSYSYVMQDEDGQTCDVHSMSAGLDYPGVGPEHSYWKDTKRVDYIDCRDDEALTAFERLASSEGILAALETSHAVAKAIEIAGKMSDQEHLVICLSGRGDKDSMEIARLRGEEW.

A compositionally biased stretch (polar residues) spans 1–11 (MSTAPSQQHAS). Residues 1 to 25 (MSTAPSQQHASAQVPDPRGRFGDFG) are disordered. At Lys100 the chain carries N6-(pyridoxal phosphate)lysine.

Belongs to the TrpB family. In terms of assembly, tetramer of two alpha and two beta chains. Pyridoxal 5'-phosphate serves as cofactor.

The catalysed reaction is (1S,2R)-1-C-(indol-3-yl)glycerol 3-phosphate + L-serine = D-glyceraldehyde 3-phosphate + L-tryptophan + H2O. The protein operates within amino-acid biosynthesis; L-tryptophan biosynthesis; L-tryptophan from chorismate: step 5/5. In terms of biological role, the beta subunit is responsible for the synthesis of L-tryptophan from indole and L-serine. This chain is Tryptophan synthase beta chain, found in Rhodopirellula baltica (strain DSM 10527 / NCIMB 13988 / SH1).